The chain runs to 312 residues: Ribosomal RNA small subunit methyltransferase H (312 aa).

Residues 33-35, Asp-53, Phe-79, Asp-100, and Gln-107 contribute to the S-adenosyl-L-methionine site; that span reads AGH.

The protein belongs to the methyltransferase superfamily. RsmH family.

Its subcellular location is the cytoplasm. It catalyses the reaction cytidine(1402) in 16S rRNA + S-adenosyl-L-methionine = N(4)-methylcytidine(1402) in 16S rRNA + S-adenosyl-L-homocysteine + H(+). Its function is as follows. Specifically methylates the N4 position of cytidine in position 1402 (C1402) of 16S rRNA. This is Ribosomal RNA small subunit methyltransferase H from Clostridium acetobutylicum (strain ATCC 824 / DSM 792 / JCM 1419 / IAM 19013 / LMG 5710 / NBRC 13948 / NRRL B-527 / VKM B-1787 / 2291 / W).